Consider the following 441-residue polypeptide: Zinc finger and BTB domain-containing protein 8A (441 aa).

The region spanning 24-92 (CDCSILVEGK…VYSGKLSLTG (69 aa)) is the BTB domain. A disordered region spans residues 135–248 (LSDKDTGSNG…HVSQSEEQVQ (114 aa)). 2 positions are modified to phosphoserine: serine 161 and serine 167. Glycyl lysine isopeptide (Lys-Gly) (interchain with G-Cter in SUMO2) cross-links involve residues lysine 178, lysine 182, and lysine 199. Basic and acidic residues-rich tracts occupy residues 198–208 (AKHEQRKDPIK) and 227–242 (GKGD…HVSQ). 2 consecutive C2H2-type zinc fingers follow at residues 282-304 (FKCP…LRCH) and 310-333 (YPCQ…RTIH). Lysine 437 participates in a covalent cross-link: Glycyl lysine isopeptide (Lys-Gly) (interchain with G-Cter in SUMO2).

Its subcellular location is the nucleus. May be involved in transcriptional regulation. The sequence is that of Zinc finger and BTB domain-containing protein 8A (Zbtb8a) from Rattus norvegicus (Rat).